We begin with the raw amino-acid sequence, 420 residues long: Putative phosphate permease HI_1604 (420 aa).

The next 12 membrane-spanning stretches (helical) occupy residues 8–28, 49–69, 88–108, 112–132, 145–165, 185–205, 216–236, 250–270, 300–320, 343–363, 370–390, and 393–413; these read GSWLVWITAVFGFFMAFGIGA, AIIIALIFESAGAYLAGGEVT, ILALGMLSTLFASGAWLFIAT, WPVSGTHTIIGAIIGFACITI, IVGSWFVTPVIAGILAYAIFA, GPYYMGITVFVLCIVTMKKGL, ETLIISLAISLIGMFFFHFYF, FGAVEKVFSILMLLTACAMAF, GGALTWWILPLGALGIAVGLI, FAAQFATAMTVVVASGTGLPI, VGAILGIGFARGIAALNLTVI, and IISSWIVTLPAGAFFAIIIFY.

Belongs to the inorganic phosphate transporter (PiT) (TC 2.A.20) family.

The protein resides in the cell inner membrane. Its function is as follows. Potential transporter for phosphate. The sequence is that of Putative phosphate permease HI_1604 from Haemophilus influenzae (strain ATCC 51907 / DSM 11121 / KW20 / Rd).